Consider the following 313-residue polypeptide: Putative S-adenosyl-L-methionine-dependent methyltransferase MUL_0706 (313 aa).

Residues D132 and 161–162 each bind S-adenosyl-L-methionine; that span reads DL.

The protein belongs to the UPF0677 family.

In terms of biological role, exhibits S-adenosyl-L-methionine-dependent methyltransferase activity. This chain is Putative S-adenosyl-L-methionine-dependent methyltransferase MUL_0706, found in Mycobacterium ulcerans (strain Agy99).